A 176-amino-acid polypeptide reads, in one-letter code: Adenine phosphoribosyltransferase (176 aa).

Belongs to the purine/pyrimidine phosphoribosyltransferase family. In terms of assembly, homodimer.

The protein resides in the cytoplasm. It catalyses the reaction AMP + diphosphate = 5-phospho-alpha-D-ribose 1-diphosphate + adenine. It functions in the pathway purine metabolism; AMP biosynthesis via salvage pathway; AMP from adenine: step 1/1. Functionally, catalyzes a salvage reaction resulting in the formation of AMP, that is energically less costly than de novo synthesis. The sequence is that of Adenine phosphoribosyltransferase from Bacteroides thetaiotaomicron (strain ATCC 29148 / DSM 2079 / JCM 5827 / CCUG 10774 / NCTC 10582 / VPI-5482 / E50).